We begin with the raw amino-acid sequence, 229 residues long: (S)-2-haloacid dehalogenase 2 (229 aa).

Asp-10 (nucleophile) is an active-site residue. Residues 11–12 (LY), Arg-41, and 118–119 (SN) each bind an (S)-2-haloacid. Residues 175-180 (SSNAWD) form an important for catalytic activity region.

Belongs to the HAD-like hydrolase superfamily. S-2-haloalkanoic acid dehalogenase family.

It catalyses the reaction an (S)-2-haloacid + H2O = a (2R)-2-hydroxycarboxylate + a halide anion + H(+). The catalysed reaction is (S)-2-chloropropanoate + H2O = (R)-lactate + chloride + H(+). Catalyzes the hydrolytic dehalogenation of small (S)-2-haloalkanoic acids to yield the corresponding (R)-2-hydroxyalkanoic acids. Acts on acids of short chain lengths, C(2) to C(4), with inversion of configuration at C-2. Active with 2-halogenated carboxylic acids and converts only the S-isomer (or L-isomer) of 2-chloropropionic acid with inversion of configuration to produce R-lactate (or D-isomer). This Pseudomonas sp. (strain CBS-3) protein is (S)-2-haloacid dehalogenase 2.